Consider the following 1387-residue polypeptide: DNA-directed RNA polymerase subunit beta (1387 aa).

Belongs to the RNA polymerase beta chain family. In terms of assembly, the RNAP catalytic core consists of 2 alpha, 1 beta, 1 beta' and 1 omega subunit. When a sigma factor is associated with the core the holoenzyme is formed, which can initiate transcription.

The catalysed reaction is RNA(n) + a ribonucleoside 5'-triphosphate = RNA(n+1) + diphosphate. Functionally, DNA-dependent RNA polymerase catalyzes the transcription of DNA into RNA using the four ribonucleoside triphosphates as substrates. The chain is DNA-directed RNA polymerase subunit beta from Xanthomonas campestris pv. campestris (strain 8004).